A 276-amino-acid chain; its full sequence is Proteasome chaperone 1 (276 aa).

Belongs to the PSMG1 family. Component of the 20S proteasome chaperone. Forms a heterodimer with ADD66 that binds to proteasome precursors.

The protein localises to the cytoplasm. Functionally, involved in 20S proteasome assembly. In Saccharomyces cerevisiae (strain ATCC 204508 / S288c) (Baker's yeast), this protein is Proteasome chaperone 1 (PBA1).